The chain runs to 487 residues: Chromosomal replication initiator protein DnaA (487 aa).

Residues 1 to 79 are domain I, interacts with DnaA modulators; that stretch reads MEKSKNIWSL…GYNNIVIVFT (79 aa). Residues 79–142 are domain II; the sequence is TNQPPKTHSN…EEEPTNFKNP (64 aa). The segment at 143 to 359 is domain III, AAA+ region; the sequence is FLKKRYTFEN…AAVTKLKAYI (217 aa). ATP contacts are provided by G187, G189, K190, and T191. The interval 360-487 is domain IV, binds dsDNA; that stretch reads DLDNIEIDIE…TELMNKIKKN (128 aa).

This sequence belongs to the DnaA family. In terms of assembly, oligomerizes as a right-handed, spiral filament on DNA at oriC.

The protein localises to the cytoplasm. Functionally, plays an essential role in the initiation and regulation of chromosomal replication. ATP-DnaA binds to the origin of replication (oriC) to initiate formation of the DNA replication initiation complex once per cell cycle. Binds the DnaA box (a 9 base pair repeat at the origin) and separates the double-stranded (ds)DNA. Forms a right-handed helical filament on oriC DNA; dsDNA binds to the exterior of the filament while single-stranded (ss)DNA is stabiized in the filament's interior. The ATP-DnaA-oriC complex binds and stabilizes one strand of the AT-rich DNA unwinding element (DUE), permitting loading of DNA polymerase. After initiation quickly degrades to an ADP-DnaA complex that is not apt for DNA replication. Binds acidic phospholipids. This is Chromosomal replication initiator protein DnaA from Borreliella burgdorferi (strain ZS7) (Borrelia burgdorferi).